Here is a 272-residue protein sequence, read N- to C-terminus: Shikimate dehydrogenase (NADP(+)) (272 aa).

Shikimate contacts are provided by residues 14–16 (SKS) and Thr-61. Catalysis depends on Lys-65, which acts as the Proton acceptor. Glu-77 provides a ligand contact to NADP(+). Shikimate contacts are provided by Asn-86 and Asp-102. NADP(+) contacts are provided by residues 126–130 (GAGGA), 149–154 (NRTVSR), and Met-213. A shikimate-binding site is contributed by Tyr-215. Gly-237 contacts NADP(+).

This sequence belongs to the shikimate dehydrogenase family. In terms of assembly, homodimer.

The enzyme catalyses shikimate + NADP(+) = 3-dehydroshikimate + NADPH + H(+). It functions in the pathway metabolic intermediate biosynthesis; chorismate biosynthesis; chorismate from D-erythrose 4-phosphate and phosphoenolpyruvate: step 4/7. Its function is as follows. Involved in the biosynthesis of the chorismate, which leads to the biosynthesis of aromatic amino acids. Catalyzes the reversible NADPH linked reduction of 3-dehydroshikimate (DHSA) to yield shikimate (SA). In Escherichia coli O6:H1 (strain CFT073 / ATCC 700928 / UPEC), this protein is Shikimate dehydrogenase (NADP(+)).